Reading from the N-terminus, the 150-residue chain is Deoxyuridine 5'-triphosphate nucleotidohydrolase (150 aa).

Substrate-binding positions include 68–70 (RSG), asparagine 81, 85–87 (TID), and lysine 95.

The protein belongs to the dUTPase family. Mg(2+) is required as a cofactor.

The catalysed reaction is dUTP + H2O = dUMP + diphosphate + H(+). It participates in pyrimidine metabolism; dUMP biosynthesis; dUMP from dCTP (dUTP route): step 2/2. This enzyme is involved in nucleotide metabolism: it produces dUMP, the immediate precursor of thymidine nucleotides and it decreases the intracellular concentration of dUTP so that uracil cannot be incorporated into DNA. The sequence is that of Deoxyuridine 5'-triphosphate nucleotidohydrolase from Rickettsia bellii (strain OSU 85-389).